Reading from the N-terminus, the 217-residue chain is Chaperone protein TorD (217 aa).

The protein belongs to the TorD/DmsD family. TorD subfamily.

The protein resides in the cytoplasm. Involved in the biogenesis of TorA. Acts on TorA before the insertion of the molybdenum cofactor and, as a result, probably favors a conformation of the apoenzyme that is competent for acquiring the cofactor. This Shewanella oneidensis (strain ATCC 700550 / JCM 31522 / CIP 106686 / LMG 19005 / NCIMB 14063 / MR-1) protein is Chaperone protein TorD.